The sequence spans 340 residues: Nicotianamine synthase 9 (340 aa).

It belongs to the nicotianamine synthase (NAS)-like family. In terms of assembly, homotrimer.

It catalyses the reaction 3 S-adenosyl-L-methionine = nicotianamine + 3 S-methyl-5'-thioadenosine + 3 H(+). Its function is as follows. Synthesizes nicotianamine, a polyamine that is the first intermediate in the synthesis of the phytosiderophores of the mugineic acid type found in gramineae which serves as a sensor for the physiological iron status within the plant, and/or might be involved in the transport of iron. In Hordeum vulgare (Barley), this protein is Nicotianamine synthase 9 (NAS9).